A 182-amino-acid polypeptide reads, in one-letter code: UPF0316 protein BCG9842_B1857 (182 aa).

3 helical membrane-spanning segments follow: residues 6–26 (LIFV…ILLV), 32–52 (SAAG…GIVF), and 58–78 (WMNI…GGYI).

The protein belongs to the UPF0316 family.

The protein localises to the cell membrane. The sequence is that of UPF0316 protein BCG9842_B1857 from Bacillus cereus (strain G9842).